Here is a 197-residue protein sequence, read N- to C-terminus: MKKFMINCFVHLKEICYLSDMDILENMVKNLLKYESEVHKLLSTYESAGKSRIIRLDESYKELDGLSIEQDELFREALRCVENGLFRAAHVLAWAGFIDFLHSILALHIPQIKNKKEKWKISKKEDFREYPDFQIIEAAKDVGILNKSEMKTLKGLLSKRNECAHPSDYFPDLNETLGYISELLKRIKILQMRIKEK.

This is an uncharacterized protein from Archaeoglobus fulgidus (strain ATCC 49558 / DSM 4304 / JCM 9628 / NBRC 100126 / VC-16).